The sequence spans 196 residues: Adenylate kinase (196 aa).

9 to 17 contacts ATP; it reads GIPGVGKST.

Belongs to the archaeal adenylate kinase family.

It localises to the cytoplasm. The enzyme catalyses AMP + ATP = 2 ADP. This chain is Adenylate kinase (adkA), found in Pyrococcus horikoshii (strain ATCC 700860 / DSM 12428 / JCM 9974 / NBRC 100139 / OT-3).